The primary structure comprises 388 residues: Succinate--CoA ligase [ADP-forming] subunit beta (388 aa).

The region spanning 9–244 (KEILRKFGVA…LDEEDPAEIE (236 aa)) is the ATP-grasp domain. Residues Lys-46, 53–55 (GRG), Glu-99, Ala-102, and Glu-107 contribute to the ATP site. Residues Asn-199 and Asp-213 each coordinate Mg(2+). Residues Asn-264 and 321 to 323 (GIM) contribute to the substrate site.

This sequence belongs to the succinate/malate CoA ligase beta subunit family. In terms of assembly, heterotetramer of two alpha and two beta subunits. Mg(2+) is required as a cofactor.

It carries out the reaction succinate + ATP + CoA = succinyl-CoA + ADP + phosphate. The catalysed reaction is GTP + succinate + CoA = succinyl-CoA + GDP + phosphate. The protein operates within carbohydrate metabolism; tricarboxylic acid cycle; succinate from succinyl-CoA (ligase route): step 1/1. Succinyl-CoA synthetase functions in the citric acid cycle (TCA), coupling the hydrolysis of succinyl-CoA to the synthesis of either ATP or GTP and thus represents the only step of substrate-level phosphorylation in the TCA. The beta subunit provides nucleotide specificity of the enzyme and binds the substrate succinate, while the binding sites for coenzyme A and phosphate are found in the alpha subunit. This chain is Succinate--CoA ligase [ADP-forming] subunit beta, found in Burkholderia lata (strain ATCC 17760 / DSM 23089 / LMG 22485 / NCIMB 9086 / R18194 / 383).